The sequence spans 372 residues: Citrate synthase 2 (372 aa).

The active site involves His-257. Phosphoserine is present on Ser-284. Residue Asp-308 is part of the active site.

It belongs to the citrate synthase family. As to quaternary structure, homodimer.

The enzyme catalyses oxaloacetate + acetyl-CoA + H2O = citrate + CoA + H(+). Its pathway is carbohydrate metabolism; tricarboxylic acid cycle; isocitrate from oxaloacetate: step 1/2. Its function is as follows. Might regulate the synthesis and function of enzymes involved in later enzymatic steps of Krebs cycle. Loss in activity results in sporulation defect. In Bacillus subtilis (strain 168), this protein is Citrate synthase 2 (citZ).